The sequence spans 211 residues: Ribonuclease T (211 aa).

The Exonuclease domain maps to 24–198 (VVVDVETGGF…YDAEKTAHLF (175 aa)). Asp-27, Glu-29, His-185, and Asp-190 together coordinate Mg(2+). His-185 serves as the catalytic Proton donor/acceptor.

This sequence belongs to the RNase T family. As to quaternary structure, homodimer. Mg(2+) serves as cofactor.

Trims short 3' overhangs of a variety of RNA species, leaving a one or two nucleotide 3' overhang. Responsible for the end-turnover of tRNA: specifically removes the terminal AMP residue from uncharged tRNA (tRNA-C-C-A). Also appears to be involved in tRNA biosynthesis. This is Ribonuclease T from Xylella fastidiosa (strain 9a5c).